Consider the following 197-residue polypeptide: Dermorphin-1 (197 aa).

The signal sequence occupies residues 1–20; sequence MSFLKKSLLLILFLGLVSLS. A propeptide spanning residues 21–45 is cleaved from the precursor; that stretch reads VCKEEKRETEEENENEENHEEGSEM. A disordered region spans residues 24–197; the sequence is EEKRETEEEN…GYPSGEAKKM (174 aa). The segment covering 30-39 has biased composition (acidic residues); sequence EEENENEENH. Residues 40–62 show a composition bias toward basic and acidic residues; that stretch reads EEGSEMKRYMFHLMDGEAKKRDS. Met49 carries the post-translational modification D-methionine. Asp54 is modified (aspartic acid 1-amide). Positions 56-77 are excised as a propeptide; sequence EAKKRDSEENEIEENHEEGSEM. Ala81 carries the D-alanine (Ala) modification. Position 86 is a serine amide (Ser86). Residues 88-97 are compositionally biased toward basic and acidic residues; sequence EAKKIKRVSE. The propeptide occupies 88 to 112; that stretch reads EAKKIKRVSEEENENEENHEEGSEM. At Ala116 the chain carries D-alanine (Ala). The residue at position 121 (Ser121) is a Serine amide. Over residues 123 to 132 the composition is skewed to basic and acidic residues; sequence EAKKIKRESE. The propeptide occupies 123-147; it reads EAKKIKRESEEEKEIEENHEEGSEM. A D-alanine (Ala) modification is found at Ala151. At Ser156 the chain carries Serine amide. A propeptide spanning residues 158 to 182 is cleaved from the precursor; it reads EAKKIKRESEEENENEENHEEGSEM. Residues 167-176 are compositionally biased toward acidic residues; sequence EEENENEENH. Ala186 carries the D-alanine (Ala) modification. Ser191 carries the post-translational modification Serine amide. The propeptide occupies 193–197; the sequence is EAKKM.

This sequence belongs to the frog skin active peptide (FSAP) family. Dermorphin subfamily. In terms of tissue distribution, expressed by the skin glands.

The protein resides in the secreted. Dermorphin has a very potent opiate-like activity. It has high affinity and selectivity for mu-type opioid receptors. Its function is as follows. Deltorphin has a very potent opiate-like activity. It has high affinity and selectivity for delta-type opioid receptors. The polypeptide is Dermorphin-1 (Phyllomedusa sauvagei (Sauvage's leaf frog)).